The primary structure comprises 269 residues: Interleukin-1 beta (269 aa).

Residues 1–116 (MAEVPELASE…TRNNDACVHD (116 aa)) constitute a propeptide that is removed on maturation.

The protein belongs to the IL-1 family. Monomer. In its precursor form, weakly interacts with full-length MEFV; the mature cytokine does not interact at all. Interacts with integrins ITGAV:ITGBV and ITGA5:ITGB1; integrin-binding is required for IL1B signaling. Interacts with cargo receptor TMED10; the interaction is direct and is required for the secretion of IL1B mature form. Interacts with HSP90AB1; the interaction facilitates cargo translocation into the ERGIC. Interacts with HSP90B1; the interaction facilitates cargo translocation into the ERGIC.

Its subcellular location is the cytoplasm. The protein localises to the cytosol. It localises to the secreted. It is found in the lysosome. The protein resides in the extracellular exosome. In terms of biological role, potent pro-inflammatory cytokine. Initially discovered as the major endogenous pyrogen, induces prostaglandin synthesis, neutrophil influx and activation, T-cell activation and cytokine production, B-cell activation and antibody production, and fibroblast proliferation and collagen production. Promotes Th17 differentiation of T-cells. Synergizes with IL12/interleukin-12 to induce IFNG synthesis from T-helper 1 (Th1) cells. Plays a role in angiogenesis by inducing VEGF production synergistically with TNF and IL6. Involved in transduction of inflammation downstream of pyroptosis: its mature form is specifically released in the extracellular milieu by passing through the gasdermin-D (GSDMD) pore. The chain is Interleukin-1 beta (IL1B) from Macaca mulatta (Rhesus macaque).